The following is a 230-amino-acid chain: Heptaprenylglyceryl phosphate synthase (230 aa).

K12 is a binding site for sn-glycerol 1-phosphate. Mg(2+) contacts are provided by D14 and T40. Sn-glycerol 1-phosphate-binding positions include 159–164 (YIEYSG), G189, and 209–210 (GD).

Belongs to the GGGP/HepGP synthase family. Group I subfamily. Homodimer. Mg(2+) is required as a cofactor.

The catalysed reaction is sn-glycerol 1-phosphate + all-trans-heptaprenyl diphosphate = 3-heptaprenyl-sn-glycero-1-phosphate + diphosphate. It participates in membrane lipid metabolism; glycerophospholipid metabolism. Functionally, prenyltransferase that catalyzes in vivo the transfer of the heptaprenyl moiety of heptaprenyl pyrophosphate (HepPP; 35 carbon atoms) to the C3 hydroxyl of sn-glycerol-1-phosphate (G1P), producing heptaprenylglyceryl phosphate (HepGP). This reaction is an ether-bond-formation step in the biosynthesis of archaea-type G1P-based membrane lipids found in Bacillales. This Staphylococcus aureus (strain Mu3 / ATCC 700698) protein is Heptaprenylglyceryl phosphate synthase.